The primary structure comprises 375 residues: Anhydro-N-acetylmuramic acid kinase (375 aa).

14-21 (GTSMDGAD) serves as a coordination point for ATP.

The protein belongs to the anhydro-N-acetylmuramic acid kinase family.

The enzyme catalyses 1,6-anhydro-N-acetyl-beta-muramate + ATP + H2O = N-acetyl-D-muramate 6-phosphate + ADP + H(+). It participates in amino-sugar metabolism; 1,6-anhydro-N-acetylmuramate degradation. Its pathway is cell wall biogenesis; peptidoglycan recycling. Catalyzes the specific phosphorylation of 1,6-anhydro-N-acetylmuramic acid (anhMurNAc) with the simultaneous cleavage of the 1,6-anhydro ring, generating MurNAc-6-P. Is required for the utilization of anhMurNAc either imported from the medium or derived from its own cell wall murein, and thus plays a role in cell wall recycling. The chain is Anhydro-N-acetylmuramic acid kinase from Cupriavidus pinatubonensis (strain JMP 134 / LMG 1197) (Cupriavidus necator (strain JMP 134)).